The primary structure comprises 488 residues: uncharacterized protein (488 aa).

Helical transmembrane passes span 2 to 22 (FGLPIPIIGLLIAVFVLVFLV), 27 to 47 (VHAFIAMLIAASIAGLVGGMS), 59 to 79 (FGGTLGSIGIVIGLGVMMGSV), 106 to 126 (LAITGYVVSIPIFVDSAFVIL), 176 to 196 (IGAMLLTGMCMAFLPVVGIVL), 241 to 261 (LLPIVLPIVLIFIKAVVHLFV), 275 to 295 (IVSFLGHPVIVLALSVLISVY), 314 to 334 (VKTAGIILLVTGAGGALGAVL), 347 to 367 (IANLPISPILIPFIVSTLVRF), 368 to 388 (IQGSGTVAMITAASISSPILA), 438 to 458 (VPTTIAWGIGGISVILANLIF), and 461 to 481 (DGSVFDLLFPVVVLASILFYI).

The protein belongs to the GntP permease family.

The protein resides in the cell inner membrane. This is an uncharacterized protein from Haemophilus influenzae (strain ATCC 51907 / DSM 11121 / KW20 / Rd).